The chain runs to 127 residues: Fluoride-specific ion channel FluC (127 aa).

4 consecutive transmembrane segments (helical) span residues 7–27 (LILI…MGLI), 37–57 (FGTL…MAMI), 69–89 (LFMI…SAEV), and 102–122 (LGIM…GVLI). 2 residues coordinate Na(+): G77 and T80.

It belongs to the fluoride channel Fluc/FEX (TC 1.A.43) family.

It is found in the cell inner membrane. The catalysed reaction is fluoride(in) = fluoride(out). With respect to regulation, na(+) is not transported, but it plays an essential structural role and its presence is essential for fluoride channel function. Functionally, fluoride-specific ion channel. Important for reducing fluoride concentration in the cell, thus reducing its toxicity. This Mannheimia succiniciproducens (strain KCTC 0769BP / MBEL55E) protein is Fluoride-specific ion channel FluC.